A 258-amino-acid polypeptide reads, in one-letter code: Snake venom serine protease 2 (258 aa).

The first 18 residues, 1–18 (MVLIRVLANLLILQLSYA), serve as a signal peptide directing secretion. Residues 19 to 24 (QKSSEL) constitute a propeptide that is removed on maturation. Positions 25-249 (VFGGRPCNIN…YNDWVQSIIA (225 aa)) constitute a Peptidase S1 domain. 6 disulfide bridges follow: C31–C163, C50–C66, C98–C256, C142–C210, C174–C189, and C200–C225. N-linked (GlcNAc...) asparagine glycosylation is present at N44. Residues H65 and D110 each act as charge relay system in the active site. 2 N-linked (GlcNAc...) asparagine glycosylation sites follow: N122 and N185. The Charge relay system role is filled by S204.

The protein belongs to the peptidase S1 family. Snake venom subfamily. Monomer. Expressed by the venom gland.

The protein resides in the secreted. Inhibited by PMSF at 2 mM concentration but not by EDTA. Its function is as follows. Snake venom serine protease that may act in the hemostasis system of the prey. Has weak fibrinogen clotting activity. Possesses amidolysis activity towards S-2251 (substrate for plasmin) but has no hydrolytic activity with S-2302 (plasma kallikrein substrate) or S-2238 (thrombin substrate). In Protobothrops jerdonii (Jerdon's pitviper), this protein is Snake venom serine protease 2.